The primary structure comprises 185 residues: Protein GrpE (185 aa).

The segment at Met-1–Leu-40 is disordered.

The protein belongs to the GrpE family. As to quaternary structure, homodimer.

Its subcellular location is the cytoplasm. Functionally, participates actively in the response to hyperosmotic and heat shock by preventing the aggregation of stress-denatured proteins, in association with DnaK and GrpE. It is the nucleotide exchange factor for DnaK and may function as a thermosensor. Unfolded proteins bind initially to DnaJ; upon interaction with the DnaJ-bound protein, DnaK hydrolyzes its bound ATP, resulting in the formation of a stable complex. GrpE releases ADP from DnaK; ATP binding to DnaK triggers the release of the substrate protein, thus completing the reaction cycle. Several rounds of ATP-dependent interactions between DnaJ, DnaK and GrpE are required for fully efficient folding. The polypeptide is Protein GrpE (Aliarcobacter butzleri (strain RM4018) (Arcobacter butzleri)).